The sequence spans 538 residues: Sterile alpha motif domain-containing protein 1 (538 aa).

The span at Met1–Glu11 shows a compositional bias: pro residues. Disordered regions lie at residues Met1 to His30 and Ser92 to Arg247. Over residues Thr12 to Pro29 the composition is skewed to low complexity. Residues Ser23–Val99 enclose the SAMD1-like winged helix (WH) domain. Thr107 carries the phosphothreonine modification. Residues Pro115–Ala125 show a composition bias toward low complexity. The span at Ala126–Pro139 shows a compositional bias: pro residues. Over residues Val140–Ala158 the composition is skewed to low complexity. Residue Ser161 is modified to Phosphoserine. Positions Gly168–Leu177 are enriched in low complexity. A compositionally biased stretch (pro residues) spans Ala178–Glu236. The segment covering Gly237 to Arg247 has biased composition (low complexity). Position 261 is a phosphoserine (Ser261). The segment covering Ala282 to Arg291 has biased composition (basic and acidic residues). Residues Ala282–Asp458 are disordered. The segment covering Lys328–Pro351 has biased composition (acidic residues). Over residues Ser425–Pro436 the composition is skewed to pro residues. The 69-residue stretch at Trp462–Asp530 folds into the SAM domain.

As to quaternary structure, homopolymerize into a closed pentameric ring. Interacts (via SAM domain) with L3MBTL3 (via SAM domain); the interaction mediates L3MBTL3 binding to chromatin. Interacts (via WH domain) with KDM1A; the interaction modulates KDM1A function. As to expression, expressed in atherosclerotic lesions, not in normal intima. Expressed in foam cells.

Its subcellular location is the nucleus. It is found in the chromosome. It localises to the secreted. Unmethylated CpG islands (CGIs)-binding protein which localizes to H3K4me3-decorated CGIs, where it acts as a transcriptional repressor. Tethers L3MBTL3 to chromatin and interacts with the KDM1A histone demethylase complex to modulate H3K4me2 and H3K4me3 levels at CGIs. Plays a role in atherogenesis by binding with LDL on cell surface and promoting LDL oxidation which leads to the formation of foam cell. This chain is Sterile alpha motif domain-containing protein 1, found in Homo sapiens (Human).